The sequence spans 404 residues: MPIKILMPALSPTMKDGNLARWLKKEGDKVNPGEVIAEIETDKATMEVESVDEGILAKIIIPQNSQNVPVNSLIAVLSEEGESTADIDAFIAKNNSVSLSLKTDTTLKKANESITNVEVVKHDLSKIFASPLAKRLAKIRNIRLESVQGSGPHGRIVKQDILSYSPSTAYNRDTEEYRSVPNNNIRQIIAKRLLESKQTVPHFYLSIECNVDKLLDIREDINKSFSEDKLTKISVNDFIILAVAKALQEVPNANASWAEDAIRYYNNVDISVAVAIENGIVTPIIKDANKKNIIELSHEMKILIKKAKDNKLTPVEFQGGGFTISNLGMYGIKNFNAIINTPQSCIMGVGASTKRAIVKNDQIIIATIMDVTLSADHRVIDGAVSAEFLASFKRFIEHPVLMLI.

Residues 2-78 (PIKILMPALS…PVNSLIAVLS (77 aa)) form the Lipoyl-binding domain. Lys43 carries the N6-lipoyllysine modification. One can recognise a Peripheral subunit-binding (PSBD) domain in the interval 128–165 (FASPLAKRLAKIRNIRLESVQGSGPHGRIVKQDILSYS). Residue His377 is part of the active site.

Belongs to the 2-oxoacid dehydrogenase family. As to quaternary structure, forms a 24-polypeptide structural core with octahedral symmetry. Requires (R)-lipoate as cofactor.

The enzyme catalyses N(6)-[(R)-dihydrolipoyl]-L-lysyl-[protein] + acetyl-CoA = N(6)-[(R)-S(8)-acetyldihydrolipoyl]-L-lysyl-[protein] + CoA. Functionally, the pyruvate dehydrogenase complex catalyzes the overall conversion of pyruvate to acetyl-CoA and CO(2). It contains multiple copies of three enzymatic components: pyruvate dehydrogenase (E1), dihydrolipoamide acetyltransferase (E2) and lipoamide dehydrogenase (E3). This chain is Dihydrolipoyllysine-residue acetyltransferase component of pyruvate dehydrogenase complex (pdhC), found in Rickettsia typhi (strain ATCC VR-144 / Wilmington).